We begin with the raw amino-acid sequence, 485 residues long: Adenosylhomocysteinase (485 aa).

Substrate is bound by residues Thr64, Asp139, and Glu205. Thr206 to Thr208 contributes to the NAD(+) binding site. Substrate is bound by residues Lys235 and Asp239. Residues Asn240, Gly269 to Gly274, Glu292, Asn327, and Ile348 to His350 contribute to the NAD(+) site.

This sequence belongs to the adenosylhomocysteinase family. Homotetramer. The cofactor is NAD(+).

The enzyme catalyses S-adenosyl-L-homocysteine + H2O = L-homocysteine + adenosine. Its pathway is amino-acid biosynthesis; L-homocysteine biosynthesis; L-homocysteine from S-adenosyl-L-homocysteine: step 1/1. In terms of biological role, adenosylhomocysteine is a competitive inhibitor of S-adenosyl-L-methionine-dependent methyl transferase reactions; therefore adenosylhomocysteinase may play a key role in the control of methylations via regulation of the intracellular concentration of adenosylhomocysteine. The protein is Adenosylhomocysteinase (SAHH) of Mesembryanthemum crystallinum (Common ice plant).